Here is a 126-residue protein sequence, read N- to C-terminus: uncharacterized protein (126 aa).

The 99-residue stretch at 20-118 (CPSREVLKHV…WIELNLPEVL (99 aa)) folds into the HTH hxlR-type domain.

This is an uncharacterized protein from Escherichia coli (strain K12).